A 272-amino-acid polypeptide reads, in one-letter code: Putative UTP--glucose-1-phosphate uridylyltransferase (272 aa).

The protein belongs to the UDPGP type 2 family.

It carries out the reaction alpha-D-glucose 1-phosphate + UTP + H(+) = UDP-alpha-D-glucose + diphosphate. This chain is Putative UTP--glucose-1-phosphate uridylyltransferase (ytdA), found in Bacillus subtilis (strain 168).